The sequence spans 94 residues: PTS system galactitol-specific EIIB component (94 aa).

The 94-residue stretch at 1 to 94 (MKRKIIVACG…QNKILTILQG (94 aa)) folds into the PTS EIIB type-2 domain. Cys9 functions as the Phosphocysteine intermediate; for EIIB activity in the catalytic mechanism. Cys9 bears the Phosphocysteine; by EIIA mark.

In terms of assembly, forms a complex with one each of subunit of GatA, GatB and 2 subunits of GatC.

Its subcellular location is the cytoplasm. It catalyses the reaction galactitol(out) + N(pros)-phospho-L-histidyl-[protein] = galactitol 1-phosphate(in) + L-histidyl-[protein]. Functionally, the phosphoenolpyruvate-dependent sugar phosphotransferase system (PTS), a major carbohydrate active transport system, catalyzes the phosphorylation of incoming sugar substrates concomitant with their translocation across the cell membrane. The enzyme II complex composed of GatA, GatB and GatC is involved in galactitol transport. It can also use D-glucitol. This is PTS system galactitol-specific EIIB component from Escherichia coli (strain K12).